The chain runs to 702 residues: Lipase maturation factor 2 (702 aa).

The next 8 helical transmembrane spans lie at 10–30 (LFLQ…YTQI), 75–95 (AQGL…ALLL), 164–184 (DLPF…SGVV), 226–246 (LSVV…FAPI), 259–279 (LLQV…LTLV), 316–336 (LLLE…YFGL), 363–383 (VTLP…LVVL), and 398–418 (AGIQ…ISLV). Residue N488 is glycosylated (N-linked (GlcNAc...) asparagine). The helical transmembrane segment at 636–656 (ILLWGLFGAVVAIRVVQTLLA) threads the bilayer. Residues 660–702 (LQSSKQTREEKRKQTSKKDSRAASEQAAANSNSRDSWAPRRKK) are disordered. Residues 665 to 681 (QTREEKRKQTSKKDSRA) show a composition bias toward basic and acidic residues. Residues 682 to 693 (ASEQAAANSNSR) are compositionally biased toward low complexity.

It belongs to the lipase maturation factor family.

It localises to the endoplasmic reticulum membrane. In terms of biological role, involved in the maturation of specific proteins in the endoplasmic reticulum. May be required for maturation and transport of active lipoprotein lipase (LPL) through the secretory pathway. The protein is Lipase maturation factor 2 (Lmf2) of Mus musculus (Mouse).